The chain runs to 323 residues: Elongation factor P--(R)-beta-lysine ligase (323 aa).

Residue 76–78 (SPE) participates in substrate binding. Residues 100 to 102 (RNE) and Asn-109 each bind ATP. Residue Tyr-118 participates in substrate binding. 242 to 243 (EL) is a binding site for ATP. Glu-249 provides a ligand contact to substrate. Gly-298 lines the ATP pocket.

This sequence belongs to the class-II aminoacyl-tRNA synthetase family. EpmA subfamily. As to quaternary structure, homodimer.

It carries out the reaction D-beta-lysine + L-lysyl-[protein] + ATP = N(6)-((3R)-3,6-diaminohexanoyl)-L-lysyl-[protein] + AMP + diphosphate + H(+). Functionally, with EpmB is involved in the beta-lysylation step of the post-translational modification of translation elongation factor P (EF-P). Catalyzes the ATP-dependent activation of (R)-beta-lysine produced by EpmB, forming a lysyl-adenylate, from which the beta-lysyl moiety is then transferred to the epsilon-amino group of a conserved specific lysine residue in EF-P. The protein is Elongation factor P--(R)-beta-lysine ligase of Mannheimia succiniciproducens (strain KCTC 0769BP / MBEL55E).